A 432-amino-acid polypeptide reads, in one-letter code: Glutamyl-tRNA reductase (432 aa).

Residues 49 to 52 (TCNR), Ser-101, 106 to 108 (EPQ), and Gln-112 contribute to the substrate site. The Nucleophile role is filled by Cys-50. Residue 181 to 186 (GAGETI) coordinates NADP(+). The segment at 408–432 (PEKPGYRHPPVATPIVRTDDANPAP) is disordered.

This sequence belongs to the glutamyl-tRNA reductase family. Homodimer.

It catalyses the reaction (S)-4-amino-5-oxopentanoate + tRNA(Glu) + NADP(+) = L-glutamyl-tRNA(Glu) + NADPH + H(+). The protein operates within porphyrin-containing compound metabolism; protoporphyrin-IX biosynthesis; 5-aminolevulinate from L-glutamyl-tRNA(Glu): step 1/2. Functionally, catalyzes the NADPH-dependent reduction of glutamyl-tRNA(Glu) to glutamate 1-semialdehyde (GSA). This Xanthomonas campestris pv. campestris (strain B100) protein is Glutamyl-tRNA reductase.